The following is a 221-amino-acid chain: ATP-dependent dethiobiotin synthetase BioD (221 aa).

13–18 (DIGKTY) is an ATP binding site. Position 17 (Thr17) interacts with Mg(2+). Lys38 is an active-site residue. Ser42 lines the substrate pocket. ATP contacts are provided by residues Asp51, 112–115 (EGSG), and 176–177 (NR). Mg(2+) contacts are provided by Asp51 and Glu112.

It belongs to the dethiobiotin synthetase family. In terms of assembly, homodimer. Mg(2+) is required as a cofactor.

The protein localises to the cytoplasm. It carries out the reaction (7R,8S)-7,8-diammoniononanoate + CO2 + ATP = (4R,5S)-dethiobiotin + ADP + phosphate + 3 H(+). It participates in cofactor biosynthesis; biotin biosynthesis; biotin from 7,8-diaminononanoate: step 1/2. Its function is as follows. Catalyzes a mechanistically unusual reaction, the ATP-dependent insertion of CO2 between the N7 and N8 nitrogen atoms of 7,8-diaminopelargonic acid (DAPA, also called 7,8-diammoniononanoate) to form a ureido ring. The sequence is that of ATP-dependent dethiobiotin synthetase BioD from Brachyspira hyodysenteriae (strain ATCC 49526 / WA1).